The chain runs to 524 residues: Alkaline phosphatase, tissue-nonspecific isozyme (524 aa).

Residues 1–17 form the signal peptide; the sequence is MISPFLLLAIGTCFASS. Asp60 serves as a coordination point for Mg(2+). Residues Asp60 and Ser110 each coordinate Zn(2+). Ser110 serves as the catalytic Phosphoserine intermediate. Ser110 bears the Phosphoserine mark. Residues Cys139 and Cys201 are joined by a disulfide bond. The N-linked (GlcNAc...) asparagine glycan is linked to Asn140. Position 173 (Thr173) interacts with Mg(2+). Asn230 carries N-linked (GlcNAc...) asparagine glycosylation. Glu235 provides a ligand contact to Ca(2+). Asn271 carries an N-linked (GlcNAc...) asparagine glycan. Ca(2+) is bound by residues Phe290 and Glu291. The N-linked (GlcNAc...) asparagine glycan is linked to Asn303. Asp306 contributes to the Ca(2+) binding site. Glu332 contacts Mg(2+). The Zn(2+) site is built by Asp337, His341, Asp378, and His379. Asn430 carries N-linked (GlcNAc...) asparagine glycosylation. His454 serves as a coordination point for Zn(2+). Cysteines 489 and 497 form a disulfide. Residue Ser499 is the site of GPI-anchor amidated serine attachment. A propeptide spans 500–524 (removed in mature form); the sequence is ASSSGSPSPGPLLLLLALLPLGSLF.

Belongs to the alkaline phosphatase family. In terms of assembly, homodimer. Mg(2+) serves as cofactor. Requires Zn(2+) as cofactor. It depends on Ca(2+) as a cofactor. In terms of processing, N-glycosylated.

The protein localises to the cell membrane. It is found in the extracellular vesicle membrane. It localises to the mitochondrion membrane. Its subcellular location is the mitochondrion intermembrane space. It carries out the reaction a phosphate monoester + H2O = an alcohol + phosphate. The catalysed reaction is diphosphate + H2O = 2 phosphate + H(+). The enzyme catalyses pyridoxal 5'-phosphate + H2O = pyridoxal + phosphate. It catalyses the reaction phosphoethanolamine + H2O = ethanolamine + phosphate. It carries out the reaction N-phosphocreatine + H2O = creatine + phosphate. The catalysed reaction is ATP + H2O = ADP + phosphate + H(+). The enzyme catalyses ADP + H2O = AMP + phosphate + H(+). It catalyses the reaction AMP + H2O = adenosine + phosphate. Phosphatase activity is specifically inhibited by 5-((5-chloro-2-methoxyphenyl)sulfonamido)nicotinamide (SBI-425). In terms of biological role, alkaline phosphatase that metabolizes various phosphate compounds and plays a key role in skeletal mineralization and adaptive thermogenesis. Has broad substrate specificity and can hydrolyze a considerable variety of compounds: however, only a few substrates, such as diphosphate (inorganic pyrophosphate; PPi), pyridoxal 5'-phosphate (PLP) and N-phosphocreatine are natural substrates. Plays an essential role in skeletal and dental mineralization via its ability to hydrolyze extracellular diphosphate, a potent mineralization inhibitor, to phosphate: it thereby promotes hydroxyapatite crystal formation and increases inorganic phosphate concentration. Acts in a non-redundant manner with PHOSPHO1 in skeletal mineralization: while PHOSPHO1 mediates the initiation of hydroxyapatite crystallization in the matrix vesicles (MVs), ALPL/TNAP catalyzes the spread of hydroxyapatite crystallization in the extracellular matrix. Also promotes dephosphorylation of osteopontin (SSP1), an inhibitor of hydroxyapatite crystallization in its phosphorylated state; it is however unclear whether ALPL/TNAP mediates SSP1 dephosphorylation via a direct or indirect manner. Catalyzes dephosphorylation of PLP to pyridoxal (PL), the transportable form of vitamin B6, in order to provide a sufficient amount of PLP in the brain, an essential cofactor for enzymes catalyzing the synthesis of diverse neurotransmitters. Additionally, also able to mediate ATP degradation in a stepwise manner to adenosine, thereby regulating the availability of ligands for purinergic receptors. Also capable of dephosphorylating microbial products, such as lipopolysaccharides (LPS) as well as other phosphorylated small-molecules, such as poly-inosine:cytosine (poly I:C). Acts as a key regulator of adaptive thermogenesis as part of the futile creatine cycle: localizes to the mitochondria of thermogenic fat cells and acts by mediating hydrolysis of N-phosphocreatine to initiate a futile cycle of creatine dephosphorylation and phosphorylation. During the futile creatine cycle, creatine and N-phosphocreatine are in a futile cycle, which dissipates the high energy charge of N-phosphocreatine as heat without performing any mechanical or chemical work. The chain is Alkaline phosphatase, tissue-nonspecific isozyme (ALPL) from Bos taurus (Bovine).